We begin with the raw amino-acid sequence, 132 residues long: U-scoloptoxin(11)-Sa1a (132 aa).

Positions Met1–Cys19 are cleaved as a signal peptide.

The protein belongs to the scoloptoxin-11 family. Post-translationally, contains 5 disulfide bonds. In terms of tissue distribution, expressed by the venom gland.

It is found in the secreted. The protein is U-scoloptoxin(11)-Sa1a of Scolopendra alternans (Florida Keys giant centipede).